A 64-amino-acid chain; its full sequence is Large ribosomal subunit protein bL35 (64 aa).

Residues 1 to 15 are compositionally biased toward basic residues; sequence MPKSKTHSGTAKRFK. The disordered stretch occupies residues 1–23; sequence MPKSKTHSGTAKRFKVSGSGKIL.

The protein belongs to the bacterial ribosomal protein bL35 family.

The sequence is that of Large ribosomal subunit protein bL35 from Rhodococcus jostii (strain RHA1).